The following is a 752-amino-acid chain: BCLAF1 and THRAP3 family member 3 (752 aa).

The span at 1–13 shows a compositional bias: basic residues; it reads MARSRSRSPRWKQ. Disordered regions lie at residues 1 to 114, 132 to 177, and 190 to 252; these read MARS…YMPT, PTVQ…QMSL, and DELR…DPAR. Residues Ser15 and Ser17 each carry the phosphoserine modification. Positions 23-57 are enriched in basic and acidic residues; it reads FEYHEERHFHGHYDPEYRHDQQRPFTWRMDDEKHG. Phosphoserine occurs at positions 78 and 80. The span at 85–109 shows a compositional bias: basic and acidic residues; sequence PVEKFDTYKPHQEYFPGRGDDDRRS. The span at 190–199 shows a compositional bias: basic and acidic residues; that stretch reads DELRHQRVQE. Position 205 is a phosphoserine (Ser205). Basic and acidic residues-rich tracts occupy residues 222 to 231 and 238 to 252; these read RYPEDHDFRK and RPTDAARYENRDPAR. A Glycyl lysine isopeptide (Lys-Gly) (interchain with G-Cter in SUMO2) cross-link involves residue Lys416. Position 592 is a phosphoserine (Ser592).

This sequence belongs to the BCLAF1/THRAP3 family.

It localises to the mitochondrion. The sequence is that of BCLAF1 and THRAP3 family member 3 from Mus musculus (Mouse).